The following is a 455-amino-acid chain: Bifunctional protein GlmU (455 aa).

The pyrophosphorylase stretch occupies residues 1-227; it reads MGLSVIILAA…CEEVQGVNDR (227 aa). UDP-N-acetyl-alpha-D-glucosamine is bound by residues 8–11, K22, Q73, 78–79, 100–102, G137, E152, N167, and N225; these read LAAG, GT, and YGD. D102 serves as a coordination point for Mg(2+). Mg(2+) is bound at residue N225. The tract at residues 228-248 is linker; that stretch reads WELTKLERYYQRLMAKKLSLA. An N-acetyltransferase region spans residues 249–455; that stretch reads GVTIIDPERF…KGWHRPTKKE (207 aa). Residues R332 and K350 each coordinate UDP-N-acetyl-alpha-D-glucosamine. Catalysis depends on H362, which acts as the Proton acceptor. Positions 365 and 376 each coordinate UDP-N-acetyl-alpha-D-glucosamine. Acetyl-CoA is bound by residues A379, 385–386, S404, A422, and R439; that span reads NY.

In the N-terminal section; belongs to the N-acetylglucosamine-1-phosphate uridyltransferase family. This sequence in the C-terminal section; belongs to the transferase hexapeptide repeat family. As to quaternary structure, homotrimer. It depends on Mg(2+) as a cofactor.

It localises to the cytoplasm. The catalysed reaction is alpha-D-glucosamine 1-phosphate + acetyl-CoA = N-acetyl-alpha-D-glucosamine 1-phosphate + CoA + H(+). The enzyme catalyses N-acetyl-alpha-D-glucosamine 1-phosphate + UTP + H(+) = UDP-N-acetyl-alpha-D-glucosamine + diphosphate. The protein operates within nucleotide-sugar biosynthesis; UDP-N-acetyl-alpha-D-glucosamine biosynthesis; N-acetyl-alpha-D-glucosamine 1-phosphate from alpha-D-glucosamine 6-phosphate (route II): step 2/2. Its pathway is nucleotide-sugar biosynthesis; UDP-N-acetyl-alpha-D-glucosamine biosynthesis; UDP-N-acetyl-alpha-D-glucosamine from N-acetyl-alpha-D-glucosamine 1-phosphate: step 1/1. It participates in bacterial outer membrane biogenesis; LPS lipid A biosynthesis. Functionally, catalyzes the last two sequential reactions in the de novo biosynthetic pathway for UDP-N-acetylglucosamine (UDP-GlcNAc). The C-terminal domain catalyzes the transfer of acetyl group from acetyl coenzyme A to glucosamine-1-phosphate (GlcN-1-P) to produce N-acetylglucosamine-1-phosphate (GlcNAc-1-P), which is converted into UDP-GlcNAc by the transfer of uridine 5-monophosphate (from uridine 5-triphosphate), a reaction catalyzed by the N-terminal domain. This Coxiella burnetii (strain CbuG_Q212) (Coxiella burnetii (strain Q212)) protein is Bifunctional protein GlmU.